The sequence spans 361 residues: Alternative oxidase, mitochondrial (361 aa).

A helical membrane pass occupies residues 155–175 (LIRYVFLESVAGVPGMVAGML). The Fe cation site is built by Glu162, Glu201, and His204. The chain crosses the membrane as a helical span at residues 221–241 (MILGAQGVFFNSFFLCYLFSP). Fe cation contacts are provided by Glu252, Glu253, Glu309, and His312. A disordered region spans residues 320–361 (GNLKQDEDPNPFVSEYGKERGEKPGKGIESLKPVGWERDEVI). Over residues 335–345 (YGKERGEKPGK) the composition is skewed to basic and acidic residues.

The protein belongs to the alternative oxidase family. Fe cation serves as cofactor.

The protein resides in the mitochondrion inner membrane. In terms of biological role, catalyzes cyanide-resistant oxygen consumption. May increase respiration when the cytochrome respiratory pathway is restricted, or in response to low temperatures. In Botryotinia fuckeliana (Noble rot fungus), this protein is Alternative oxidase, mitochondrial (aox).